The primary structure comprises 446 residues: Adenylosuccinate synthetase (446 aa).

Residues 21–27 and 49–51 contribute to the GTP site; these read GDEGKGK and GHT. The active-site Proton acceptor is aspartate 22. Aspartate 22 and glycine 49 together coordinate Mg(2+). Residues 22-25, 47-50, threonine 141, arginine 155, glutamine 236, threonine 251, and arginine 319 each bind IMP; these read DEGK and NAGH. The active-site Proton donor is histidine 50. Position 315 to 321 (315 to 321) interacts with substrate; sequence VTTGRSR. GTP-binding positions include arginine 321, 347 to 349, and 429 to 431; these read KLD and STS.

This sequence belongs to the adenylosuccinate synthetase family. Homodimer. Mg(2+) serves as cofactor.

The protein localises to the cytoplasm. It carries out the reaction IMP + L-aspartate + GTP = N(6)-(1,2-dicarboxyethyl)-AMP + GDP + phosphate + 2 H(+). It participates in purine metabolism; AMP biosynthesis via de novo pathway; AMP from IMP: step 1/2. Plays an important role in the de novo pathway of purine nucleotide biosynthesis. Catalyzes the first committed step in the biosynthesis of AMP from IMP. The sequence is that of Adenylosuccinate synthetase from Polaromonas sp. (strain JS666 / ATCC BAA-500).